The chain runs to 259 residues: Protein TILLER ANGLE CONTROL 1 (259 aa).

The IGT motif signature appears at 56–62 (GILAIGT). Disordered stretches follow at residues 96-123 (EEKA…AKMH), 206-226 (SCME…PLKA), and 239-259 (GKKI…PVTA). Positions 109-119 (APSEPASALEP) are enriched in low complexity.

Belongs to the TAC family. As to expression, expressed in the basal part of seedlings.

Functionally, involved in the regulation of tiller growth angle. Promotes horizontal shoot growth. TAC1 and LAZY1 play opposite functions in the regulation of tiller growth angle. This Oryza sativa subsp. indica (Rice) protein is Protein TILLER ANGLE CONTROL 1.